The primary structure comprises 303 residues: Deoxyhypusine hydroxylase (303 aa).

HEAT-like PBS-type repeat units follow at residues 56-82 and 89-115; these read LKHE…VLQD and VRHE…YAQD. Residues histidine 58, histidine 91, and glutamate 92 each coordinate Fe cation. The segment at 139-158 is disordered; the sequence is DSPDTNPYLSVDPAPPAEEK. 3 HEAT-like PBS-type repeats span residues 176–202, 207–233, and 240–266; these read HRYR…GLQI, FRHE…ALER, and VRHE…HVGD. The Fe cation site is built by histidine 209, histidine 242, and glutamate 243.

It belongs to the deoxyhypusine hydroxylase family. It depends on Fe(2+) as a cofactor.

It carries out the reaction [eIF5A protein]-deoxyhypusine + AH2 + O2 = [eIF5A protein]-hypusine + A + H2O. It participates in protein modification; eIF5A hypusination. Catalyzes the hydroxylation of the N(6)-(4-aminobutyl)-L-lysine intermediate produced by deoxyhypusine synthase/DHPS on a critical lysine of the eukaryotic translation initiation factor 5A/eIF-5A. This is the second step of the post-translational modification of that lysine into an unusual amino acid residue named hypusine. Hypusination is unique to mature eIF-5A factor and is essential for its function. This is Deoxyhypusine hydroxylase (dohh) from Xenopus laevis (African clawed frog).